Reading from the N-terminus, the 500-residue chain is NAD(P)H-quinone oxidoreductase chain 4, chloroplastic (500 aa).

The next 14 helical transmembrane spans lie at 4–24, 37–57, 87–107, 113–130, 134–154, 167–187, 211–231, 242–262, 272–292, 313–333, 334–354, 386–406, 417–437, and 462–482; these read FPWL…IFFL, ISIC…HFQL, VGSI…AWPV, LFYF…GLFS, LLLF…LLSM, FILY…GMGL, ILLY…IPLH, HYST…YGLI, AHYL…IYAA, MGFI…GAIL, QILS…TASD, LALP…GLIT, LITF…LSML, and LFIL…PDLV.

The protein belongs to the complex I subunit 4 family.

The protein resides in the plastid. It is found in the chloroplast thylakoid membrane. It catalyses the reaction a plastoquinone + NADH + (n+1) H(+)(in) = a plastoquinol + NAD(+) + n H(+)(out). It carries out the reaction a plastoquinone + NADPH + (n+1) H(+)(in) = a plastoquinol + NADP(+) + n H(+)(out). The protein is NAD(P)H-quinone oxidoreductase chain 4, chloroplastic of Agrostis stolonifera (Creeping bentgrass).